A 575-amino-acid chain; its full sequence is Alpha-(1,6)-fucosyltransferase (575 aa).

The Cytoplasmic portion of the chain corresponds to 1-9 (MRAWTGSWR). Residues 10-30 (WIMLILFAWGTLLFYIGGHLV) form a helical; Signal-anchor for type II membrane protein membrane-spanning segment. At 31–575 (RDNDHPDHSS…KYPTYPEAEK (545 aa)) the chain is on the lumenal side. Disulfide bonds link C204–C266, C212–C230, and C218–C222. A GT23 domain is found at 206-493 (KARKLVCNIN…PDASANFHSL (288 aa)). The residue at position 278 (S278) is a Phosphoserine. Positions 299–305 (PRPPYLP) match the SH3-binding motif. An important for donor substrate binding region spans residues 365 to 366 (RR). C465 and C472 form a disulfide bridge. The SH3 domain maps to 502 to 563 (QNAHNQIAVY…PSYKVREKIE (62 aa)).

Belongs to the glycosyltransferase 23 family. Post-translationally, tyrosine phosphorylated by PKDCC/VLK.

The protein localises to the golgi apparatus. It is found in the golgi stack membrane. It catalyses the reaction N(4)-{beta-D-GlcNAc-(1-&gt;2)-alpha-D-Man-(1-&gt;3)-[beta-D-GlcNAc-(1-&gt;2)-alpha-D-Man-(1-&gt;6)]-beta-D-Man-(1-&gt;4)-beta-D-GlcNAc-(1-&gt;4)-beta-D-GlcNAc}-L-asparaginyl-[protein] + GDP-beta-L-fucose = an N(4)-{beta-D-GlcNAc-(1-&gt;2)-alpha-D-Man-(1-&gt;3)-[beta-D-GlcNAc-(1-&gt;2)-alpha-D-Man-(1-&gt;6)]-beta-D-Man-(1-&gt;4)-beta-D-GlcNAc-(1-&gt;4)-[alpha-L-Fuc-(1-&gt;6)]-beta-D-GlcNAc}-L-asparaginyl-[protein] + GDP + H(+). The protein operates within protein modification; protein glycosylation. Its function is as follows. Catalyzes the addition of fucose in alpha 1-6 linkage to the first GlcNAc residue, next to the peptide chains in N-glycans. The protein is Alpha-(1,6)-fucosyltransferase (Fut8) of Rattus norvegicus (Rat).